Reading from the N-terminus, the 114-residue chain is Gas vesicle protein J (114 aa).

Positions 63 to 114 (PTGTDMERVEEAAGISPDESRSLDTRSESEQMDELPGEAGASVSNTAPQEEE) are disordered. Basic and acidic residues predominate over residues 80–91 (DESRSLDTRSES). The span at 104-114 (SVSNTAPQEEE) shows a compositional bias: polar residues.

Belongs to the gas vesicle GvpA family. In terms of assembly, gvpF to GvpM interact with each other in vitro, and may form multi-subunit complex(es). Interacts with GvpA.

Its subcellular location is the gas vesicle. Its function is as follows. A minor component of the gas vesicle, proteins GvpF to GvpM might be involved in nucleating gas vesicle formation. Gas vesicles are hollow, gas filled proteinaceous nanostructures found in some microorganisms. They allow positioning of halobacteria at the optimal depth for growth in the poorly aerated, shallow brine pools of their habitat. Functionally, expression of a 9.5 kb mc-vac DNA fragment containing 2 divergently transcribed regions (gvpD-gvpE-gvpF-gvpG-gvpH-gvpI-gvpJ-gvpK-gvpL-gvpM and gvpA-gvpC-gvpN-gvpO) allows H.volcanii to produce gas vesicles. The protein is Gas vesicle protein J of Haloferax mediterranei (strain ATCC 33500 / DSM 1411 / JCM 8866 / NBRC 14739 / NCIMB 2177 / R-4) (Halobacterium mediterranei).